Consider the following 229-residue polypeptide: Clathrin light chain B (229 aa).

2 stretches are compositionally biased toward low complexity: residues 1-17 and 45-58; these read MAEDFGFFSSSESGAPE and GAPAASQVASAQPG. Positions 1–70 are disordered; sequence MAEDFGFFSS…SGAGSEDMST (70 aa). 2 positions are modified to phosphoserine: S11 and S13. The segment at 93–155 is involved in binding clathrin heavy chain; it reads ADRLTQEPES…QVEKNKINNR (63 aa). T187 bears the Phosphothreonine mark. A disulfide bond links C199 and C209. Position 204 is an N6-acetyllysine (K204). S217 is modified (phosphoserine).

It belongs to the clathrin light chain family. Clathrin coats are formed from molecules containing 3 heavy chains and 3 light chains. Interacts (via N-terminus) with HIP1. Interacts with HIP1R.

The protein localises to the cytoplasmic vesicle membrane. It localises to the membrane. It is found in the coated pit. Its function is as follows. Clathrin is the major protein of the polyhedral coat of coated pits and vesicles. This is Clathrin light chain B (Cltb) from Mus musculus (Mouse).